The primary structure comprises 1030 residues: Tricorn protease (1030 aa).

Residues 1–270 (MANLLQNPDI…DNVKSLDIGP (270 aa)) are six-bladed beta propeller. The tract at residues 93–94 (RR) is binds the substrate's C-terminus. Residues 286–635 (LEDFSMSPGD…EEEKSLNIDA (350 aa)) form a seven-bladed beta propeller region. The interval 641–712 (NVKEDFAEMY…RTSHSYEMGG (72 aa)) is C-1. H706 functions as the Charge relay system in the catalytic mechanism. The PDZ-like stretch occupies residues 721 to 816 (RAGRIACDFK…SGFVDVLQDD (96 aa)). A C-2 region spans residues 817 to 1022 (RYIRYRAWVE…IEMVLADLEK (206 aa)). 877 to 879 (GGG) serves as a coordination point for substrate. S926 serves as the catalytic Nucleophile. 954 to 956 (GIS) provides a ligand contact to substrate. E984 serves as the catalytic Charge relay system.

The protein belongs to the peptidase S41B family. In terms of assembly, part of the tricorn proteolytic complex.

Its subcellular location is the cytoplasm. Tricorn degrades oligopeptides in a sequential manner. In Thermoplasma volcanium (strain ATCC 51530 / DSM 4299 / JCM 9571 / NBRC 15438 / GSS1), this protein is Tricorn protease (tri).